A 443-amino-acid chain; its full sequence is UDP-N-acetylmuramate--L-alanine ligase (443 aa).

110–116 (GAHGKTS) provides a ligand contact to ATP.

The protein belongs to the MurCDEF family.

The protein localises to the cytoplasm. The catalysed reaction is UDP-N-acetyl-alpha-D-muramate + L-alanine + ATP = UDP-N-acetyl-alpha-D-muramoyl-L-alanine + ADP + phosphate + H(+). The protein operates within cell wall biogenesis; peptidoglycan biosynthesis. Cell wall formation. The protein is UDP-N-acetylmuramate--L-alanine ligase of Lactococcus lactis subsp. lactis (strain IL1403) (Streptococcus lactis).